Reading from the N-terminus, the 324-residue chain is Cytosolic sulfotransferase 13 (324 aa).

76-81 (KSGTTW) provides a ligand contact to 3'-phosphoadenylyl sulfate. Histidine 134 serves as the catalytic Proton acceptor. 3'-phosphoadenylyl sulfate contacts are provided by residues arginine 156, serine 164, tyrosine 222, and 288-290 (RKG).

It belongs to the sulfotransferase 1 family.

The protein resides in the cytoplasm. Functionally, sulfotransferase that utilizes 3'-phospho-5'-adenylyl sulfate (PAPS) as sulfonate donor. This Arabidopsis thaliana (Mouse-ear cress) protein is Cytosolic sulfotransferase 13 (SOT13).